The sequence spans 532 residues: Apolipoprotein N-acyltransferase (532 aa).

A run of 6 helical transmembrane segments spans residues 37–57 (IFVAGFVSFPVLVWLIDGAIA), 75–95 (WWFGFGYFVSGLWWIGTALLV), 106–126 (LAVLGLPAFLALFYAFAAMIA), 128–148 (LLWSDGLGRILALAFGFALAE), 179–199 (VIGLVGMSALAVFVFAAPALL), and 207–227 (TGIGLAIFLALAHVGFGAWTL). In terms of domain architecture, CN hydrolase spans 245–494 (VQPSIAQAMK…VGVVDSYLPS (250 aa)). The active-site Proton acceptor is Glu-289. The active site involves Lys-353. Cys-406 functions as the Nucleophile in the catalytic mechanism. Residues 505–525 (GWIQTVLILLTLLAASVGLIL) form a helical membrane-spanning segment.

The protein belongs to the CN hydrolase family. Apolipoprotein N-acyltransferase subfamily.

It localises to the cell inner membrane. It carries out the reaction N-terminal S-1,2-diacyl-sn-glyceryl-L-cysteinyl-[lipoprotein] + a glycerophospholipid = N-acyl-S-1,2-diacyl-sn-glyceryl-L-cysteinyl-[lipoprotein] + a 2-acyl-sn-glycero-3-phospholipid + H(+). It participates in protein modification; lipoprotein biosynthesis (N-acyl transfer). Functionally, catalyzes the phospholipid dependent N-acylation of the N-terminal cysteine of apolipoprotein, the last step in lipoprotein maturation. This Brucella suis biovar 1 (strain 1330) protein is Apolipoprotein N-acyltransferase.